The following is a 607-amino-acid chain: Zinc metalloproteinase-disintegrin-like atrase-A (607 aa).

Residues 1-20 form the signal peptide; it reads MIQALLVIICLAVFPHQGSS. Residues 21–196 constitute a propeptide that is removed on maturation; that stretch reads IILESGNVND…KTSQLTNTPE (176 aa). Positions 205–398 constitute a Peptidase M12B domain; the sequence is KYIEFYLVVD…ERPQCILNKP (194 aa). Ca(2+) is bound at residue Glu208. Residues Asn220 and Asn270 are each glycosylated (N-linked (GlcNAc...) asparagine). Asp290 provides a ligand contact to Ca(2+). Residue Asn301 is glycosylated (N-linked (GlcNAc...) asparagine). 3 disulfide bridges follow: Cys314–Cys393, Cys353–Cys377, and Cys355–Cys360. Residues His338, His342, and His348 each contribute to the Zn(2+) site. Positions 393, 396, 411, 413, 415, 418, and 421 each coordinate Ca(2+). Residues 406–492 enclose the Disintegrin domain; the sequence is RPVCGNNFVE…ECPTDSLQRN (87 aa). 14 disulfides stabilise this stretch: Cys409–Cys438, Cys420–Cys433, Cys422–Cys428, Cys432–Cys455, Cys446–Cys452, Cys451–Cys477, Cys464–Cys484, Cys471–Cys503, Cys496–Cys508, Cys515–Cys565, Cys530–Cys573, Cys543–Cys553, Cys560–Cys599, and Cys593–Cys604. The N-linked (GlcNAc...) asparagine glycan is linked to Asn434. Residues 470 to 472 carry the D/ECD-tripeptide motif; the sequence is DCD. Positions 472, 473, 475, 487, and 488 each coordinate Ca(2+). Asn522 is a glycosylation site (N-linked (GlcNAc...) asparagine).

Belongs to the venom metalloproteinase (M12B) family. P-III subfamily. P-IIIa sub-subfamily. As to quaternary structure, monomer. Zn(2+) is required as a cofactor. As to expression, expressed by the venom gland.

The protein localises to the secreted. Snake venom zinc metalloproteinase that inhibits platelet aggregation by cleaving platelet glycoprotein Ib alpha (GP1BA) at Glu-298/Asp-299, and abolishes binding of von Willebrand factor (VWF) to GPIBA. This Naja atra (Chinese cobra) protein is Zinc metalloproteinase-disintegrin-like atrase-A.